The chain runs to 410 residues: Lissencephaly-1 homolog (410 aa).

The LisH domain maps to 7–39 (QQEELQLAVHAYLVEAGHAEAAAAMAKSANLGD). A coiled-coil region spans residues 55–80 (TTITRLQKRNMELQAEVEELRSSARA). 7 WD repeats span residues 104–143 (GHRLPITAVAIHPSFAVMASASEDASIKLWDMESGNFERS), 146–185 (GHTNAVNDIAYDREGNRLVSCSTDMTIKVWNMDNFTCTKT), 188–227 (GHDHTVSSVRFDHTGDRVFSASRDKTIKIWELATGYCLQT), 230–269 (GHSDWVRSIDVSADGAWICSASSDHTVRVWSVASGECKHV), 294–333 (MIFGSKPSAEAASKGPFVASASRDKSICLFDVSTGQHLAR), 336–375 (GHDNWVRATAWSRGGRYLFSVADDKTMRVWDIATKRVSKT), and 378–410 (AHNHFVSCIAVHAKNTHVVTGSVDLKVKVWECN).

This sequence belongs to the WD repeat LIS1/nudF family.

The protein resides in the cytoplasm. Its subcellular location is the cytoskeleton. It localises to the microtubule organizing center. It is found in the centrosome. Positively regulates the activity of the minus-end directed microtubule motor protein dynein. May enhance dynein-mediated microtubule sliding by targeting dynein to the microtubule plus end. Required for several dynein- and microtubule-dependent processes. This chain is Lissencephaly-1 homolog, found in Monosiga brevicollis (Choanoflagellate).